A 371-amino-acid polypeptide reads, in one-letter code: Chorismate synthase (371 aa).

NADP(+) is bound by residues arginine 48 and arginine 54. FMN is bound by residues 125 to 127, 238 to 239, glycine 278, 293 to 297, and arginine 319; these read RSS, NA, and KPTSS.

Belongs to the chorismate synthase family. Homotetramer. FMNH2 serves as cofactor.

The catalysed reaction is 5-O-(1-carboxyvinyl)-3-phosphoshikimate = chorismate + phosphate. The protein operates within metabolic intermediate biosynthesis; chorismate biosynthesis; chorismate from D-erythrose 4-phosphate and phosphoenolpyruvate: step 7/7. Functionally, catalyzes the anti-1,4-elimination of the C-3 phosphate and the C-6 proR hydrogen from 5-enolpyruvylshikimate-3-phosphate (EPSP) to yield chorismate, which is the branch point compound that serves as the starting substrate for the three terminal pathways of aromatic amino acid biosynthesis. This reaction introduces a second double bond into the aromatic ring system. The chain is Chorismate synthase from Polynucleobacter asymbioticus (strain DSM 18221 / CIP 109841 / QLW-P1DMWA-1) (Polynucleobacter necessarius subsp. asymbioticus).